Reading from the N-terminus, the 387-residue chain is 2-deoxystreptamine glucosyltransferase (387 aa).

Belongs to the glycosyltransferase group 1 family.

It catalyses the reaction 2-deoxystreptamine + UDP-N-acetyl-alpha-D-glucosamine = 2'-N-acetylparomamine + UDP + H(+). The enzyme catalyses 2-deoxystreptamine + UDP-alpha-D-glucose = 2'-deamino-2'-hydroxyparomamine + UDP + H(+). Its pathway is antibiotic biosynthesis; kanamycin biosynthesis. Its function is as follows. Glycosyltransferase involved in the biosynthesis of kanamycin by mediating conversion of 2-deoxystreptamine (2-DOS) to 2'-N-acetylparomamine using UDP-alpha-D-glucose as sugar donor. Can also accept UDP-alpha-D-glucosamine, but with a much lower activity compared to UDP-alpha-D-glucose. The chain is 2-deoxystreptamine glucosyltransferase (kanF) from Streptomyces kanamyceticus.